Consider the following 393-residue polypeptide: Na(+)/H(+) antiporter NhaA 1 (393 aa).

Helical transmembrane passes span 23–43 (AGGV…NSPF), 58–78 (LSLT…LVGL), 96–116 (MLPG…FTAF), 126–146 (GWAV…SLLG), 155–175 (VFLA…IAIF), 178–198 (AEIS…LFVM), 224–244 (GVHA…KAAP), 265–285 (VAFI…FAGL), 298–318 (IMLG…WLAI), 334–354 (LYGV…IGLL), and 367–387 (IGVL…LRLV).

This sequence belongs to the NhaA Na(+)/H(+) (TC 2.A.33) antiporter family.

Its subcellular location is the cell inner membrane. It carries out the reaction Na(+)(in) + 2 H(+)(out) = Na(+)(out) + 2 H(+)(in). Na(+)/H(+) antiporter that extrudes sodium in exchange for external protons. The sequence is that of Na(+)/H(+) antiporter NhaA 1 from Brucella anthropi (strain ATCC 49188 / DSM 6882 / CCUG 24695 / JCM 21032 / LMG 3331 / NBRC 15819 / NCTC 12168 / Alc 37) (Ochrobactrum anthropi).